Reading from the N-terminus, the 501-residue chain is UDP-N-acetylmuramoyl-L-alanyl-D-glutamate--2,6-diaminopimelate ligase (501 aa).

UDP-N-acetyl-alpha-D-muramoyl-L-alanyl-D-glutamate is bound at residue Ser29. 112–118 contributes to the ATP binding site; sequence GTNGKTS. Residues 161 to 162, Ser188, and Arg196 contribute to the UDP-N-acetyl-alpha-D-muramoyl-L-alanyl-D-glutamate site; that span reads TT. Lys228 is subject to N6-carboxylysine. Meso-2,6-diaminopimelate-binding positions include Arg393, 417–420, Gly468, and Glu472; that span reads DNPR. The short motif at 417–420 is the Meso-diaminopimelate recognition motif element; the sequence is DNPR.

The protein belongs to the MurCDEF family. MurE subfamily. Mg(2+) serves as cofactor. Post-translationally, carboxylation is probably crucial for Mg(2+) binding and, consequently, for the gamma-phosphate positioning of ATP.

Its subcellular location is the cytoplasm. It carries out the reaction UDP-N-acetyl-alpha-D-muramoyl-L-alanyl-D-glutamate + meso-2,6-diaminopimelate + ATP = UDP-N-acetyl-alpha-D-muramoyl-L-alanyl-gamma-D-glutamyl-meso-2,6-diaminopimelate + ADP + phosphate + H(+). It functions in the pathway cell wall biogenesis; peptidoglycan biosynthesis. Functionally, catalyzes the addition of meso-diaminopimelic acid to the nucleotide precursor UDP-N-acetylmuramoyl-L-alanyl-D-glutamate (UMAG) in the biosynthesis of bacterial cell-wall peptidoglycan. In Acidovorax sp. (strain JS42), this protein is UDP-N-acetylmuramoyl-L-alanyl-D-glutamate--2,6-diaminopimelate ligase.